The chain runs to 494 residues: MLASGMLLVALLVCLTVMVLMSVWQQRKSKGKLPPGPTPLPFIGNYLQLNTEQMYNSLMKISERYGPVFTIHLGPRRVVVLCGHDAVREALVDQAEEFSGRGEQATFDWVFKGYGVVFSNGERAKQLRRFSIATLRDFGVGKRGIEERIQEEAGFLIDALRGTGGANIDPTFFLSRTVSNVISSIVFGDRFDYKDKEFLSLLRMMLGIFQFTSTSTGQLYEMFSSVMKHLPGPQQQAFQLLQGLEDFIAKKVEHNQRTLDPNSPRDFIDSFLIRMQEEEKNPNTEFYLKNLVMTTLNLFIGGTETVSTTLRYGFLLLMKHPEVEAKVHEEIDRVIGKNRQPKFEDRAKMPYMEAVIHEIQRFGDVIPMSLARRVKKDTKFRDFFLPKGTEVYPMLGSVLRDPSFFSNPQDFNPQHFLNEKGQFKKSDAFVPFSIGKRNCFGEGLARMELFLFFTTVMQNFRLKSSQSPKDIDVSPKHVGFATIPRNYTMSFLPR.

The substrate site is built by Phe107 and Asn297. Cys439 contacts heme.

It belongs to the cytochrome P450 family. Requires heme as cofactor. Liver.

The protein localises to the endoplasmic reticulum membrane. Its subcellular location is the microsome membrane. The catalysed reaction is 1,4-cineole + reduced [NADPH--hemoprotein reductase] + O2 = 2-exo-hydroxy-1,4-cineole + oxidized [NADPH--hemoprotein reductase] + H2O + H(+). In terms of biological role, exhibits a high coumarin 7-hydroxylase activity. Can act in the hydroxylation of the anti-cancer drugs cyclophosphamide and ifosphamide. Competent in the metabolic activation of aflatoxin B1. Constitutes the major nicotine C-oxidase. Acts as a 1,4-cineole 2-exo-monooxygenase. Possesses low phenacetin O-deethylation activity. The polypeptide is Cytochrome P450 2A6 (CYP2A6) (Homo sapiens (Human)).